The following is a 222-amino-acid chain: Imidazoleglycerol-phosphate dehydratase (222 aa).

It belongs to the imidazoleglycerol-phosphate dehydratase family.

The enzyme catalyses D-erythro-1-(imidazol-4-yl)glycerol 3-phosphate = 3-(imidazol-4-yl)-2-oxopropyl phosphate + H2O. It participates in amino-acid biosynthesis; L-histidine biosynthesis; L-histidine from 5-phospho-alpha-D-ribose 1-diphosphate: step 6/9. The chain is Imidazoleglycerol-phosphate dehydratase (HIS3) from Scheffersomyces stipitis (strain ATCC 58785 / CBS 6054 / NBRC 10063 / NRRL Y-11545) (Yeast).